A 552-amino-acid polypeptide reads, in one-letter code: Alcohol dehydrogenase [acceptor] (552 aa).

3-32 serves as a coordination point for FAD; the sequence is DYIIVGAGSAGCVLANRLSADPSKRVCLLE. The active-site Proton acceptor is the histidine 469.

The protein belongs to the GMC oxidoreductase family. It depends on FAD as a cofactor.

Its subcellular location is the cell inner membrane. It carries out the reaction a primary alcohol + A = an aldehyde + AH2. In terms of biological role, converts aliphatic medium-chain-length alcohols into aldehydes. May be linked to the electron transfer chain. In Pseudomonas putida (Arthrobacter siderocapsulatus), this protein is Alcohol dehydrogenase [acceptor] (alkJ).